Reading from the N-terminus, the 398-residue chain is G2/mitotic-specific cyclin-B2 (398 aa).

Thr8 bears the Phosphothreonine mark. Residues Ser11, Ser77, and Ser92 each carry the phosphoserine modification. At Thr94 the chain carries Phosphothreonine. 3 positions are modified to phosphoserine: Ser99, Ser392, and Ser398.

This sequence belongs to the cyclin family. Cyclin AB subfamily. As to quaternary structure, interacts with the CDK1 protein kinase to form a serine/threonine kinase holoenzyme complex also known as maturation promoting factor (MPF). The cyclin subunit imparts substrate specificity to the complex.

In terms of biological role, essential for the control of the cell cycle at the G2/M (mitosis) transition. This chain is G2/mitotic-specific cyclin-B2 (CCNB2), found in Homo sapiens (Human).